The primary structure comprises 171 residues: Endoribonuclease YbeY (171 aa).

Residues His-126, His-130, and His-136 each contribute to the Zn(2+) site.

The protein belongs to the endoribonuclease YbeY family. The cofactor is Zn(2+).

The protein resides in the cytoplasm. In terms of biological role, single strand-specific metallo-endoribonuclease involved in late-stage 70S ribosome quality control and in maturation of the 3' terminus of the 16S rRNA. This Rhizobium etli (strain ATCC 51251 / DSM 11541 / JCM 21823 / NBRC 15573 / CFN 42) protein is Endoribonuclease YbeY.